The primary structure comprises 255 residues: Small ribosomal subunit protein eS1 (255 aa).

N-acetylalanine; partial is present on Ala-2.

The protein belongs to the eukaryotic ribosomal protein eS1 family. Component of the small ribosomal subunit. Mature ribosomes consist of a small (40S) and a large (60S) subunit. The 40S subunit contains about 33 different proteins and 1 molecule of RNA (18S). The 60S subunit contains about 49 different proteins and 3 molecules of RNA (25S, 5.8S and 5S).

The protein resides in the cytoplasm. The chain is Small ribosomal subunit protein eS1 from Candida glabrata (strain ATCC 2001 / BCRC 20586 / JCM 3761 / NBRC 0622 / NRRL Y-65 / CBS 138) (Yeast).